A 652-amino-acid chain; its full sequence is ATP-dependent RNA helicase DDX51 (652 aa).

The segment at 1–145 (MALFTINRYL…KAEKAEELTS (145 aa)) is disordered. Residues 25-34 (KALLAKLQKQ) are compositionally biased toward low complexity. Composition is skewed to basic and acidic residues over residues 66–77 (LQETKGKIKKSE) and 107–122 (VIVK…EKSV). Residues 212 to 220 (FFPVQAEVI) carry the Q motif motif. One can recognise a Helicase ATP-binding domain in the interval 234-442 (GPGGYRPRDV…LLDLHQPRLF (209 aa)). 247–254 (APTGSGKT) contributes to the ATP binding site. Residues 362–365 (DEAD) carry the DEAD box motif. Positions 480–626 (IILHFLLRLK…KQHVHPEALK (147 aa)) constitute a Helicase C-terminal domain.

The protein belongs to the DEAD box helicase family. DDX51/DBP6 subfamily.

The protein localises to the nucleus. Its subcellular location is the nucleolus. It catalyses the reaction ATP + H2O = ADP + phosphate + H(+). Its function is as follows. ATP-binding RNA helicase involved in the biogenesis of 60S ribosomal subunits. This Danio rerio (Zebrafish) protein is ATP-dependent RNA helicase DDX51 (ddx51).